The following is a 691-amino-acid chain: Elongation factor G (691 aa).

Residues 8–283 (KRVRNIGIAA…AVVAYLPAPD (276 aa)) enclose the tr-type G domain. GTP is bound by residues 17–24 (AHIDAGKT), 81–85 (DTPGH), and 135–138 (NKMD).

This sequence belongs to the TRAFAC class translation factor GTPase superfamily. Classic translation factor GTPase family. EF-G/EF-2 subfamily.

The protein localises to the cytoplasm. In terms of biological role, catalyzes the GTP-dependent ribosomal translocation step during translation elongation. During this step, the ribosome changes from the pre-translocational (PRE) to the post-translocational (POST) state as the newly formed A-site-bound peptidyl-tRNA and P-site-bound deacylated tRNA move to the P and E sites, respectively. Catalyzes the coordinated movement of the two tRNA molecules, the mRNA and conformational changes in the ribosome. This is Elongation factor G from Campylobacter lari (strain RM2100 / D67 / ATCC BAA-1060).